The sequence spans 270 residues: Protein tonB2 (270 aa).

The Cytoplasmic segment spans residues 1 to 51 (MATPQPVDARTQPWRETPGGDLVALGRPVRQALHLVRHNPAQGRVLSRRET). A helical transmembrane segment spans residues 52-69 (ILLVLFALTLHGAVIHWL). Residues 70–270 (SQQRTPALPE…VSVPIDFKLN (201 aa)) lie on the Periplasmic side of the membrane. The tract at residues 80-187 (VPPQVPPMTI…LTPPSANAGY (108 aa)) is disordered. The span at 94–118 (PAPPVVEPPPPEPLPPVVEEPPPPV) shows a compositional bias: pro residues. A compositionally biased stretch (basic residues) spans 133–143 (PKPKPKPKPQP). Residues 144–180 (RPKPAPKAVEPAPPAPPQPAAPPAPPAPAAAPAPLTP) show a composition bias toward pro residues. Residues 180–270 (PPSANAGYLH…VSVPIDFKLN (91 aa)) form the TonB C-terminal domain.

The protein belongs to the TonB family. As to quaternary structure, homodimer. Forms a complex with the accessory proteins ExbB and ExbD.

It localises to the cell inner membrane. Functionally, interacts with outer membrane receptor proteins that carry out high-affinity binding and energy dependent uptake into the periplasmic space of specific substrates. It could act to transduce energy from the cytoplasmic membrane to specific energy-requiring processes in the outer membrane, resulting in the release into the periplasm of ligands bound by these outer membrane proteins. This Pseudomonas aeruginosa (strain ATCC 15692 / DSM 22644 / CIP 104116 / JCM 14847 / LMG 12228 / 1C / PRS 101 / PAO1) protein is Protein tonB2 (tonB2).